Consider the following 122-residue polypeptide: Large ribosomal subunit protein uL14 (122 aa).

Belongs to the universal ribosomal protein uL14 family. Part of the 50S ribosomal subunit. Forms a cluster with proteins L3 and L19. In the 70S ribosome, L14 and L19 interact and together make contacts with the 16S rRNA in bridges B5 and B8.

Binds to 23S rRNA. Forms part of two intersubunit bridges in the 70S ribosome. This chain is Large ribosomal subunit protein uL14, found in Chlorobium phaeobacteroides (strain BS1).